The sequence spans 120 residues: C-C motif chemokine 23 (120 aa).

Residues 1–21 (MKVSVAALSCLMLVTALGSQA) form the signal peptide. 3 disulfides stabilise this stretch: C54-C78, C55-C94, and C65-C105.

It belongs to the intercrine beta (chemokine CC) family.

It is found in the secreted. Shows chemotactic activity for monocytes, resting T-lymphocytes, and neutrophils, but not for activated lymphocytes. Inhibits proliferation of myeloid progenitor cells in colony formation assays. This protein can bind heparin. Binds CCR1. In Macaca mulatta (Rhesus macaque), this protein is C-C motif chemokine 23 (CCL23).